The chain runs to 276 residues: Checkpoint protein HUS1B (276 aa).

The protein belongs to the HUS1 family. In terms of assembly, interacts with RAD1 and RAD9B.

This is Checkpoint protein HUS1B (Hus1b) from Mus musculus (Mouse).